Reading from the N-terminus, the 689-residue chain is Protein SDA1 homolog (689 aa).

Positions 254-319 form a coiled coil; the sequence is KKNTKNKKKL…RFEVKLMHMD (66 aa). 2 disordered regions span residues 485 to 512 and 606 to 689; these read EQEK…DGEW and KPKS…RLMK. Over residues 668-681 the composition is skewed to basic and acidic residues; it reads SFRDKQIALRDSLL.

The protein belongs to the SDA1 family.

Its subcellular location is the nucleus. It is found in the nucleolus. Required for 60S pre-ribosomal subunits export to the cytoplasm. This chain is Protein SDA1 homolog (sdad1), found in Xenopus tropicalis (Western clawed frog).